Reading from the N-terminus, the 489-residue chain is Probable cytochrome P450 CYP44 (489 aa).

A disordered region spans residues 12–31 (VEKCPYSPTSSPNTPPRTFS). Residues 16–29 (PYSPTSSPNTPPRT) are compositionally biased toward low complexity. A heme-binding site is contributed by cysteine 438.

Belongs to the cytochrome P450 family. The cofactor is heme.

Its function is as follows. Cytochromes P450 are a group of heme-thiolate monooxygenases. They oxidize a variety of structurally unrelated compounds, including steroids, fatty acids, and xenobiotics. In Caenorhabditis elegans, this protein is Probable cytochrome P450 CYP44 (cyp-44A1).